The sequence spans 327 residues: MSHRFQTIAVVGAGAWGTALAAVAARAGRNVTLYARDADHAVRIATARENPRLPGIPLADSITVTTDLARAARADAILIVVPAQHLRGAVMHLAPLLAPGTPLVACAKGIEHSTHKFMTEVIAEAAPRATPAILSGPSFADDVARGLPTAVTLAAPDEALASALVQALGSSTFRPYHSTDVRGVEIGGAAKNVLAIAAGIVSGRDLGASALAALTTRGFAELVRLGRAYGARSETLTGLSGLGDLILTCAGPQSRNFAAGLALGRGEPLPAGKLAEGQYTAPVLVELAASRGVEMPVAQAVAAILSGTVTIDAAIEALMLRPFKAEE.

3 residues coordinate NADPH: tryptophan 16, arginine 36, and lysine 108. Sn-glycerol 3-phosphate contacts are provided by lysine 108, glycine 136, and serine 138. Alanine 140 serves as a coordination point for NADPH. Residues lysine 191, aspartate 244, serine 254, arginine 255, and asparagine 256 each contribute to the sn-glycerol 3-phosphate site. The active-site Proton acceptor is the lysine 191. NADPH is bound at residue arginine 255. NADPH-binding residues include leucine 274 and glutamate 276.

Belongs to the NAD-dependent glycerol-3-phosphate dehydrogenase family.

It is found in the cytoplasm. The catalysed reaction is sn-glycerol 3-phosphate + NAD(+) = dihydroxyacetone phosphate + NADH + H(+). It catalyses the reaction sn-glycerol 3-phosphate + NADP(+) = dihydroxyacetone phosphate + NADPH + H(+). It functions in the pathway membrane lipid metabolism; glycerophospholipid metabolism. Functionally, catalyzes the reduction of the glycolytic intermediate dihydroxyacetone phosphate (DHAP) to sn-glycerol 3-phosphate (G3P), the key precursor for phospholipid synthesis. The polypeptide is Glycerol-3-phosphate dehydrogenase [NAD(P)+] (Bradyrhizobium sp. (strain ORS 278)).